We begin with the raw amino-acid sequence, 360 residues long: Phosphoserine aminotransferase (360 aa).

Arginine 41 contacts L-glutamate. 4 residues coordinate pyridoxal 5'-phosphate: tryptophan 101, threonine 152, aspartate 172, and glutamine 195. Lysine 196 bears the N6-(pyridoxal phosphate)lysine mark. 237–238 (NT) serves as a coordination point for pyridoxal 5'-phosphate.

Belongs to the class-V pyridoxal-phosphate-dependent aminotransferase family. SerC subfamily. In terms of assembly, homodimer. Pyridoxal 5'-phosphate is required as a cofactor.

It is found in the cytoplasm. The enzyme catalyses O-phospho-L-serine + 2-oxoglutarate = 3-phosphooxypyruvate + L-glutamate. It catalyses the reaction 4-(phosphooxy)-L-threonine + 2-oxoglutarate = (R)-3-hydroxy-2-oxo-4-phosphooxybutanoate + L-glutamate. The protein operates within amino-acid biosynthesis; L-serine biosynthesis; L-serine from 3-phospho-D-glycerate: step 2/3. Its pathway is cofactor biosynthesis; pyridoxine 5'-phosphate biosynthesis; pyridoxine 5'-phosphate from D-erythrose 4-phosphate: step 3/5. In terms of biological role, catalyzes the reversible conversion of 3-phosphohydroxypyruvate to phosphoserine and of 3-hydroxy-2-oxo-4-phosphonooxybutanoate to phosphohydroxythreonine. This Burkholderia cenocepacia (strain ATCC BAA-245 / DSM 16553 / LMG 16656 / NCTC 13227 / J2315 / CF5610) (Burkholderia cepacia (strain J2315)) protein is Phosphoserine aminotransferase.